The sequence spans 215 residues: Small ribosomal subunit protein uS5 (215 aa).

The segment covering 1-11 has biased composition (polar residues); the sequence is MTDSSPQSNPN. The segment at 1 to 61 is disordered; that stretch reads MTDSSPQSNP…GQDRDSEWQE (61 aa). Over residues 12–28 the composition is skewed to low complexity; the sequence is AVPGAADVPAAAQGQQQ. Positions 39 to 61 are enriched in basic and acidic residues; that stretch reads RGDRRGDRRGGRRGQDRDSEWQE. An S5 DRBM domain is found at 59-122; it reads WQERVVQIRR…ADGKKHLVKV (64 aa).

Belongs to the universal ribosomal protein uS5 family. In terms of assembly, part of the 30S ribosomal subunit. Contacts proteins S4 and S8.

Functionally, with S4 and S12 plays an important role in translational accuracy. In terms of biological role, located at the back of the 30S subunit body where it stabilizes the conformation of the head with respect to the body. This chain is Small ribosomal subunit protein uS5, found in Synechococcus sp. (strain CC9902).